We begin with the raw amino-acid sequence, 367 residues long: Probable butyrate kinase (367 aa).

This sequence belongs to the acetokinase family.

The protein localises to the cytoplasm. The catalysed reaction is butanoate + ATP = butanoyl phosphate + ADP. In Bacillus cereus (strain ATCC 10987 / NRS 248), this protein is Probable butyrate kinase.